Reading from the N-terminus, the 811-residue chain is TLR4 interactor with leucine rich repeats (811 aa).

Positions 1–25 (MEAARALRLLLVVCGCLALPPLAEP) are cleaved as a signal peptide. The LRRNT domain occupies 26–57 (VCPERCDCQHPQHLLCTNRGLRVVPKTSSLPS). The Extracellular portion of the chain corresponds to 26–696 (VCPERCDCQH…AGSRGGVDYQ (671 aa)). 12 LRR repeats span residues 61-81 (VLTY…DFHR), 84-105 (QLRR…TFEK), 108-129 (RLEE…TLAP), 132-153 (KLRI…SFEG), 156-177 (SLVK…VFAP), 180-201 (NLLY…AFAQ), 204-223 (KLRF…RHAA), 230-251 (SLSS…IFQH), 254-275 (RLGL…AFWG), 278-299 (ALRE…LLEP), 302-323 (SLEA…TFGH), and 326-347 (RLRE…IFAA). N-linked (GlcNAc...) asparagine glycosylation is present at asparagine 73. A glycan (N-linked (GlcNAc...) asparagine) is linked at asparagine 209. The LRRCT domain occupies 359-416 (NGWTCDCRLRGLKRWMGDWHSQGRLLTVFVQCRHPPALRGKYLDYLDDQQLQNGSCAD). The interval 484 to 549 (LSRRGPGLQQ…PSPAGDPWQR (66 aa)) is disordered. 2 stretches are compositionally biased toward low complexity: residues 492–508 (QQPS…APQS) and 530–544 (PTPT…SPAG). An N-linked (GlcNAc...) asparagine glycan is attached at asparagine 589. The helical transmembrane segment at 697–717 (LLTLALLTVNALLVLLALAAW) threads the bilayer. Residues 718 to 811 (ASRWLRRKLR…EDRLLQRFAD (94 aa)) are Cytoplasmic-facing. Phosphoserine is present on serine 798.

In terms of assembly, belongs to the lipopolysaccharide (LPS) receptor, a multi-protein complex containing at least CD14, MD-2 and TLR4. Interacts with TLR4; this interaction is greatly enhanced by LPS stimulation. Interacts with LPS. N-glycolysaled. Highly expressed in the brain, ovary, small intestine and spleen.

The protein resides in the membrane. Its function is as follows. Component of the TLR4 signaling complex. Mediates the innate immune response to bacterial lipopolysaccharide (LPS) leading to cytokine secretion. In Homo sapiens (Human), this protein is TLR4 interactor with leucine rich repeats (TRIL).